The chain runs to 78 residues: Protein SlyX homolog (78 aa).

This sequence belongs to the SlyX family.

The protein is Protein SlyX homolog of Xanthomonas oryzae pv. oryzae (strain MAFF 311018).